The sequence spans 274 residues: Large ribosomal subunit protein uL2cz/uL2cy (274 aa).

Disordered stretches follow at residues 1 to 20 (MAIH…AVDS) and 223 to 274 (MNPV…RRSK).

The protein belongs to the universal ribosomal protein uL2 family. Part of the 50S ribosomal subunit.

It is found in the plastid. Its subcellular location is the chloroplast. The chain is Large ribosomal subunit protein uL2cz/uL2cy (rpl2-A) from Eucalyptus globulus subsp. globulus (Tasmanian blue gum).